A 203-amino-acid polypeptide reads, in one-letter code: Large ribosomal subunit protein bL25 (203 aa).

It belongs to the bacterial ribosomal protein bL25 family. CTC subfamily. Part of the 50S ribosomal subunit; part of the 5S rRNA/L5/L18/L25 subcomplex. Contacts the 5S rRNA. Binds to the 5S rRNA independently of L5 and L18.

This is one of the proteins that binds to the 5S RNA in the ribosome where it forms part of the central protuberance. The sequence is that of Large ribosomal subunit protein bL25 from Rickettsia typhi (strain ATCC VR-144 / Wilmington).